The primary structure comprises 348 residues: Peptidyl-Lys metalloendopeptidase (348 aa).

The N-terminal stretch at 1–18 (MFSSVMVALVSLAVAVSA) is a signal peptide. Residues 19-181 (NPGLSLKVSG…RATPTLTRPV (163 aa)) constitute a propeptide that is removed on maturation. 2 disulfides stabilise this stretch: Cys-186-Cys-256 and Cys-258-Cys-278. Thr-223 is a glycosylation site (O-linked (Man) threonine; partial). His-298 is a Zn(2+) binding site. Glu-299 is a catalytic residue. Zn(2+) contacts are provided by His-302 and Asp-311.

Zn(2+) is required as a cofactor.

It is found in the secreted. The catalysed reaction is Preferential cleavage in proteins: -Xaa-|-Lys- (in which Xaa may be Pro).. With respect to regulation, inhibited by chelating agents such as EDTA and 1,10-phenanthroline. In Grifola frondosa (Maitake), this protein is Peptidyl-Lys metalloendopeptidase (MEP).